A 433-amino-acid polypeptide reads, in one-letter code: L-saccharopine oxidase (433 aa).

The signal sequence occupies residues 1-18 (MSRTIVIVGCGVFGLSTA). Residues Asn24, Asn119, Asn188, and Asn229 are each glycosylated (N-linked (GlcNAc...) asparagine).

This sequence belongs to the MSOX/MTOX family. As to quaternary structure, monomer. Requires FAD as cofactor.

Its subcellular location is the secreted. The protein localises to the cytoplasm. It localises to the nucleus. It catalyses the reaction L-saccharopine + O2 + H2O = (S)-2-amino-6-oxohexanoate + L-glutamate + H2O2. This is L-saccharopine oxidase from Schizosaccharomyces pombe (strain 972 / ATCC 24843) (Fission yeast).